The primary structure comprises 799 residues: Elongation factor G, mitochondrial (799 aa).

The N-terminal 34 residues, 1 to 34 (MRCPSLTRLPYRAVSGLPRSVVRLQSQNFLTRRC), are a transit peptide targeting the mitochondrion. A tr-type G domain is found at 97–384 (SRVRNIGIAA…GVVDYLPNPA (288 aa)). GTP contacts are provided by residues 106-113 (AHIDSGKT), 182-186 (DTPGH), and 236-239 (NKMD).

Belongs to the TRAFAC class translation factor GTPase superfamily. Classic translation factor GTPase family. EF-G/EF-2 subfamily.

It is found in the mitochondrion. It functions in the pathway protein biosynthesis; polypeptide chain elongation. Its function is as follows. Mitochondrial GTPase that catalyzes the GTP-dependent ribosomal translocation step during translation elongation. During this step, the ribosome changes from the pre-translocational (PRE) to the post-translocational (POST) state as the newly formed A-site-bound peptidyl-tRNA and P-site-bound deacylated tRNA move to the P and E sites, respectively. Catalyzes the coordinated movement of the two tRNA molecules, the mRNA and conformational changes in the ribosome. In Aspergillus flavus (strain ATCC 200026 / FGSC A1120 / IAM 13836 / NRRL 3357 / JCM 12722 / SRRC 167), this protein is Elongation factor G, mitochondrial (mef1).